Reading from the N-terminus, the 229-residue chain is Lactate utilization protein C (229 aa).

The protein belongs to the LutC/YkgG family.

In terms of biological role, is involved in L-lactate degradation and allows cells to grow with lactate as the sole carbon source. The sequence is that of Lactate utilization protein C from Shouchella clausii (strain KSM-K16) (Alkalihalobacillus clausii).